Here is a 485-residue protein sequence, read N- to C-terminus: Dipeptide and tripeptide permease C (485 aa).

The Cytoplasmic portion of the chain corresponds to 1 to 12 (MKTPSQPRAIYY). The chain crosses the membrane as a helical span at residues 13 to 33 (IVAIQIWEYFSFYGMRALLIL). At 34–46 (YLTHQLGFDDNHA) the chain is on the periplasmic side. The helical transmembrane segment at 47 to 67 (ISLFSAYASLVYVTPILGGWL) threads the bilayer. At 68-70 (ADR) the chain is on the cytoplasmic side. Residues 71–93 (LLGNRTAVIAGALLMTLGHVVLG) traverse the membrane as a helical segment. Over 94 to 102 (IDTNSTFSL) the chain is Periplasmic. Residues 103-125 (YLALAIIICGYGLFKSNISCLLG) traverse the membrane as a helical segment. Residues 126-140 (ELYDENDHRRDGGFS) lie on the Cytoplasmic side of the membrane. Residues 141–161 (LLYAAGNIGSIAAPIACGLAA) traverse the membrane as a helical segment. Topologically, residues 162-164 (QWY) are periplasmic. Residues 165 to 185 (GWHVGFALAGGGMFIGLLIFL) form a helical membrane-spanning segment. Residues 186–208 (SGHRHFQSTRSMDKKALTSVKFA) are Cytoplasmic-facing. Residues 209–229 (LPVWSWLVVMLCLAPVFFTLL) traverse the membrane as a helical segment. At 230–234 (LENDW) the chain is on the periplasmic side. The helical transmembrane segment at 235–255 (SGYLLAIVCLIAAQIIARMMI) threads the bilayer. At 256–262 (KFPEHRR) the chain is on the cytoplasmic side. A helical membrane pass occupies residues 263–283 (ALWQIVLLMFVGTLFWVLAQQ). Residues 284–307 (GGSTISLFIDRFVNRQAFNIEVPT) are Periplasmic-facing. A helical transmembrane segment spans residues 308–328 (ALFQSVNAIAVMLAGVVLAWL). Residues 329–340 (ASPESRGNSTLR) are Cytoplasmic-facing. The helical transmembrane segment at 341–361 (VWLKFAFGLLLMACGFMLLAF) threads the bilayer. Topologically, residues 362-375 (DARHAAADGQASMG) are periplasmic. The helical transmembrane segment at 376–396 (VMISGLALMGFAELFIDPVAI) threads the bilayer. The Cytoplasmic segment spans residues 397-406 (AQITRLKMSG). A helical transmembrane segment spans residues 407-427 (VLTGIYMLATGAVANWLAGVV). The Periplasmic portion of the chain corresponds to 428–446 (AQQTTESQISGMAIAAYQR). Residues 447–467 (FFSQMGEWTLACVAIIVVLAF) traverse the membrane as a helical segment. Residues 468–485 (ATRFLFSTPTNMIQESND) are Cytoplasmic-facing.

Belongs to the major facilitator superfamily. Proton-dependent oligopeptide transporter (POT/PTR) (TC 2.A.17) family. Monomer.

It localises to the cell inner membrane. Proton-dependent permease that transports di- and tripeptides. Shows significantly higher specificity towards dipeptides than tripeptides. Has a preference for dipeptides with a C-terminal Lys residue. Can bind Ala-Lys, Lys-Ala, Ala-Ala. Can also transport alanine and trialanine. In Escherichia coli (strain K12), this protein is Dipeptide and tripeptide permease C.